Consider the following 291-residue polypeptide: ATP synthase gamma chain (291 aa).

The protein belongs to the ATPase gamma chain family. In terms of assembly, F-type ATPases have 2 components, CF(1) - the catalytic core - and CF(0) - the membrane proton channel. CF(1) has five subunits: alpha(3), beta(3), gamma(1), delta(1), epsilon(1). CF(0) has three main subunits: a, b and c.

The protein resides in the cell inner membrane. In terms of biological role, produces ATP from ADP in the presence of a proton gradient across the membrane. The gamma chain is believed to be important in regulating ATPase activity and the flow of protons through the CF(0) complex. The polypeptide is ATP synthase gamma chain (Rhodopseudomonas palustris (strain HaA2)).